The chain runs to 153 residues: Small ribosomal subunit protein bS16 (153 aa).

It belongs to the bacterial ribosomal protein bS16 family.

The protein is Small ribosomal subunit protein bS16 of Leifsonia xyli subsp. xyli (strain CTCB07).